The sequence spans 427 residues: Enolase 1 (427 aa).

Q162 lines the (2R)-2-phosphoglycerate pocket. Catalysis depends on E204, which acts as the Proton donor. Mg(2+)-binding residues include D241, E285, and D312. Positions 337, 366, 367, and 388 each coordinate (2R)-2-phosphoglycerate. The active-site Proton acceptor is the K337.

The protein belongs to the enolase family. It depends on Mg(2+) as a cofactor.

It localises to the cytoplasm. The protein localises to the secreted. It is found in the cell surface. It catalyses the reaction (2R)-2-phosphoglycerate = phosphoenolpyruvate + H2O. The protein operates within carbohydrate degradation; glycolysis; pyruvate from D-glyceraldehyde 3-phosphate: step 4/5. Functionally, catalyzes the reversible conversion of 2-phosphoglycerate (2-PG) into phosphoenolpyruvate (PEP). It is essential for the degradation of carbohydrates via glycolysis. In Chlorobaculum tepidum (strain ATCC 49652 / DSM 12025 / NBRC 103806 / TLS) (Chlorobium tepidum), this protein is Enolase 1.